The primary structure comprises 98 residues: NADH-ubiquinone oxidoreductase chain 4L (98 aa).

3 consecutive transmembrane segments (helical) span residues 1–21 (MSLV…GLLM), 25–45 (HLMS…ILST), and 67–87 (AACE…TYGV).

It belongs to the complex I subunit 4L family. Core subunit of respiratory chain NADH dehydrogenase (Complex I) which is composed of 45 different subunits.

It localises to the mitochondrion inner membrane. It carries out the reaction a ubiquinone + NADH + 5 H(+)(in) = a ubiquinol + NAD(+) + 4 H(+)(out). Functionally, core subunit of the mitochondrial membrane respiratory chain NADH dehydrogenase (Complex I) which catalyzes electron transfer from NADH through the respiratory chain, using ubiquinone as an electron acceptor. Part of the enzyme membrane arm which is embedded in the lipid bilayer and involved in proton translocation. This chain is NADH-ubiquinone oxidoreductase chain 4L (MT-ND4L), found in Talpa europaea (European mole).